Here is an 84-residue protein sequence, read N- to C-terminus: MKVVLIVCLVWVMAMMELVSCECWSQADCSVGHCCAGSSFSKNCRPYGGDGEQCEPRNKYEVYSTGCPCEENLMCSVINRCQSA.

Residues 1–21 (MKVVLIVCLVWVMAMMELVSC) form the signal peptide. Disulfide bonds link Cys23–Cys35, Cys29–Cys44, Cys34–Cys67, Cys54–Cys75, and Cys69–Cys81.

The protein belongs to the AVIT (prokineticin) family. In terms of tissue distribution, expressed by the venom gland.

The protein resides in the secreted. The chain is U8-theraphotoxin-Hhn1d from Cyriopagopus hainanus (Chinese bird spider).